The sequence spans 208 residues: Ribosomal RNA small subunit methyltransferase J (208 aa).

S-adenosyl-L-methionine-binding positions include 54–55, 70–71, and aspartate 122; these read RD and ER.

It belongs to the methyltransferase superfamily. RsmJ family.

It localises to the cytoplasm. The catalysed reaction is guanosine(1516) in 16S rRNA + S-adenosyl-L-methionine = N(2)-methylguanosine(1516) in 16S rRNA + S-adenosyl-L-homocysteine + H(+). Its function is as follows. Specifically methylates the guanosine in position 1516 of 16S rRNA. This is Ribosomal RNA small subunit methyltransferase J from Agrobacterium fabrum (strain C58 / ATCC 33970) (Agrobacterium tumefaciens (strain C58)).